The primary structure comprises 98 residues: Peptide YY (98 aa).

Residues 1 to 28 (MVAVRRPWPVTVAMLLILLACLGALVDA) form the signal peptide. Serine 41 is modified (phosphoserine). Tyrosine 64 bears the Tyrosine amide mark. Residues 68–98 (DVPAALFSKLLFTDDSDSENLPFRPEGLDQW) constitute a propeptide that is removed on maturation.

This sequence belongs to the NPY family. Post-translationally, the peptide YY form is cleaved at Pro-30 by the prolyl endopeptidase FAP (seprase) activity (in vitro) to generate peptide YY(3-36).

It is found in the secreted. This gut peptide inhibits exocrine pancreatic secretion, has a vasoconstrictory action and inhibitis jejunal and colonic mobility. The protein is Peptide YY (Pyy) of Mus musculus (Mouse).